The following is a 117-amino-acid chain: Holo-[acyl-carrier-protein] synthase (117 aa).

Mg(2+) contacts are provided by aspartate 6 and glutamate 55.

This sequence belongs to the P-Pant transferase superfamily. AcpS family. It depends on Mg(2+) as a cofactor.

Its subcellular location is the cytoplasm. It carries out the reaction apo-[ACP] + CoA = holo-[ACP] + adenosine 3',5'-bisphosphate + H(+). Its function is as follows. Transfers the 4'-phosphopantetheine moiety from coenzyme A to a Ser of acyl-carrier-protein. This is Holo-[acyl-carrier-protein] synthase from Chlorobaculum tepidum (strain ATCC 49652 / DSM 12025 / NBRC 103806 / TLS) (Chlorobium tepidum).